We begin with the raw amino-acid sequence, 1001 residues long: Receptor-type tyrosine-protein phosphatase N2 (1001 aa).

A signal peptide spans 1-27 (MGPPLPLLLLLLLPPPLPRALPAPASA). Residues 1-407 (MGPPLPLLLL…PEGPLLEKSS (407 aa)) form an involved in localization to secretory granules; interaction with CPE region. The Extracellular portion of the chain corresponds to 28–600 (RGRQLPGRLG…HQEEQEDSTK (573 aa)). Position 259 is an omega-N-methylarginine (arginine 259). Disordered regions lie at residues 271–296 (PFSA…SMDD), 308–359 (QQNS…DAPE), and 394–459 (SPLL…LEDQ). A compositionally biased stretch (basic and acidic residues) spans 312–325 (EVDRLGPLKEEKAD). Position 339 is a phosphoserine (serine 339). Over residues 340–355 (QESHGRGAEGQPREQT) the composition is skewed to basic and acidic residues. A compositionally biased stretch (low complexity) spans 394–404 (SPLLPEGPLLE). Residues 405–416 (KSSREEIKKSEQ) are compositionally biased toward basic and acidic residues. The span at 417 to 428 (PEEVLSSEEETA) shows a compositional bias: acidic residues. A phosphoserine mark is found at serine 422 and serine 423. Basic and acidic residues predominate over residues 429–459 (GVEHVRSRTYSKDLFERKPNSEPQPRRLEDQ). Residue asparagine 550 is glycosylated (N-linked (GlcNAc...) asparagine). Residues 601–621 (FILLTFLSIACILGVLLASSL) form a helical membrane-spanning segment. The Cytoplasmic portion of the chain corresponds to 622 to 1001 (AYCLRHNSHY…VNAILKALPQ (380 aa)). The short motif at 652 to 661 (YQELCRQRMA) is the Tyrosine-based internalization motif element. The tract at residues 663–705 (RPQDRSEGPHTSRINSVSSQFSDGPMPSPSARSSTSSWSEEPV) is disordered. The segment covering 674-684 (SRINSVSSQFS) has biased composition (polar residues). Residues serine 678 and serine 684 each carry the phosphoserine modification. A compositionally biased stretch (low complexity) spans 691 to 705 (PSARSSTSSWSEEPV). Position 697 is a phosphothreonine (threonine 697). The Tyrosine-protein phosphatase domain maps to 731 to 991 (LEKEWEALCA…EFALTAVAEE (261 aa)). Residues aspartate 899 and 931 to 937 (CSDGAGR) contribute to the substrate site. The Phosphocysteine intermediate role is filled by cysteine 931. N6-acetyllysine is present on lysine 956. A substrate-binding site is contributed by glutamine 976. The Leucine-based sorting signal motif lies at 990–996 (EEVNAIL).

The protein belongs to the protein-tyrosine phosphatase family. In terms of assembly, self-associates. Interacts (via cytoplasmic domain) with PTPRN (via cytoplasmic domain). Interacts (precursor form) with CPE. Interacts with HAP1 isoform A. Interacts with AP2A1 or AP2A2 and AP1G1; indicative for an association with adaptor protein complex 2 (AP-2) and adaptor protein complex 1 (AP-1). Interacts with AP2M1; indicative for an association with adaptor protein complex 2 (AP-2). Interacts with MYO5A. Subject to proteolytic cleavage at multiple sites during maturation of secretory granules. In the brain at least IA-2beta71, IA-2beta64 and IA-2beta60 have been detected, in the pancreas and a pancreatic beta cell line only IA-2beta60 has been detected. As to expression, detected in brain. Detected in pancreas islets (at protein level). Detected in pancreas and brain.

Its subcellular location is the cytoplasmic vesicle. It localises to the secretory vesicle membrane. The protein localises to the secretory vesicle. The protein resides in the synaptic vesicle membrane. It carries out the reaction O-phospho-L-tyrosyl-[protein] + H2O = L-tyrosyl-[protein] + phosphate. Plays a role in vesicle-mediated secretory processes. Required for normal accumulation of secretory vesicles in hippocampus, pituitary and pancreatic islets. Required for the accumulation of normal levels of insulin-containing vesicles and preventing their degradation. Plays a role in insulin secretion in response to glucose stimuli. Required for normal accumulation of the neurotransmitters norepinephrine, dopamine and serotonin in the brain. In females, but not in males, required for normal accumulation and secretion of pituitary hormones, such as luteinizing hormone (LH) and follicle-stimulating hormone (FSH). Required to maintain normal levels of renin expression and renin release. May regulate catalytic active protein-tyrosine phosphatases such as PTPRA through dimerization. Has phosphatidylinositol phosphatase activity; the PIPase activity is involved in its ability to regulate insulin secretion. Can dephosphorylate phosphatidylinositol 4,5-biphosphate (PI(4,5)P2), phosphatidylinositol 5-phosphate and phosphatidylinositol 3-phosphate. Regulates PI(4,5)P2 level in the plasma membrane and localization of cofilin at the plasma membrane and thus is indirectly involved in regulation of actin dynamics related to cell migration and metastasis; upon hydrolysis of PI(4,5)P2 cofilin is released from the plasma membrane and acts in the cytoplasm in severing F-actin filaments. This is Receptor-type tyrosine-protein phosphatase N2 (Ptprn2) from Mus musculus (Mouse).